Reading from the N-terminus, the 119-residue chain is Beta-2-microglobulin (119 aa).

The signal sequence occupies residues 1–20; sequence MARFVVVPLFVLLSLFGLEA. Residues 25–114 form the Ig-like C1-type domain; that stretch reads PKIQVYSRYP…VTFSTPKTVK (90 aa). The cysteines at positions 45 and 100 are disulfide-linked.

Belongs to the beta-2-microglobulin family. In terms of assembly, heterodimer of an alpha chain and a beta chain. Beta-2-microglobulin is the beta-chain of major histocompatibility complex class I molecules.

The protein localises to the secreted. In terms of biological role, component of the class I major histocompatibility complex (MHC). Involved in the presentation of peptide antigens to the immune system. This Saguinus niger (Black tamarin) protein is Beta-2-microglobulin (B2M).